Consider the following 110-residue polypeptide: MTSTRKLSVSCLIVFMVSSLIAVSSGWLSIGKIAIKDGKCDPKNGNLYAIGEKWYNDEDCFEITCIQGDKGSVAQQVASCPVHAVKPGCELVFPGGTYPKCCPYYECPNS.

An N-terminal signal peptide occupies residues 1–26; it reads MTSTRKLSVSCLIVFMVSSLIAVSSG.

Belongs to the scoloptoxin-16 family. Post-translationally, contains 4 disulfide bonds. In terms of tissue distribution, expressed by the venom gland.

The protein resides in the secreted. In Ethmostigmus rubripes (Giant centipede), this protein is U-scoloptoxin(16)-Er6a.